The chain runs to 107 residues: Disintegrin lebestatin (107 aa).

A signal peptide spans 1–20 (MIQVLLVIICLAVFPFQGSS). A propeptide spanning residues 21 to 64 (KTLKSGNVNDYEVVNPGTVTGLPKGAVEEKHEPMKGNTLQKFPL) is cleaved from the precursor. 4 disulfides stabilise this stretch: C65-C74, C70-C93, C71-C98, and C83-C100. Residues 65–105 (CTTGPCCRQCKLKPAGTTCWKTSRTSHYCTGKSCDCPSYPG) enclose the Disintegrin domain. The Cell attachment site; atypical (KTS) signature appears at 85–87 (KTS). Positions 106–107 (NG) are excised as a propeptide.

As to quaternary structure, monomer. In terms of tissue distribution, expressed by the venom gland.

The protein localises to the secreted. Its function is as follows. Specifically interacts with the alpha-1/beta-1 integrin (ITGA1/ITGB1). Exhibits highly inhibitory effects on cell adhesion and cell migration to collagens I and IV. Also shows in vivo anti-angiogenic activity. The polypeptide is Disintegrin lebestatin (Macrovipera lebetinus (Levantine viper)).